The following is a 114-amino-acid chain: T cell receptor beta variable 5-4 (114 aa).

The signal sequence occupies residues 1-21 (MGPGLLCWALLCLLGAGSVET). The Ig-like domain occupies 22 to 114 (GVTQSPTHLI…SALYLCASSL (93 aa)). An intrachain disulfide couples cysteine 42 to cysteine 110. Asparagine 90 carries N-linked (GlcNAc...) asparagine glycosylation.

In terms of assembly, alpha-beta TR is a heterodimer composed of an alpha and beta chain; disulfide-linked. The alpha-beta TR is associated with the transmembrane signaling CD3 coreceptor proteins to form the TR-CD3 (TcR or TCR). The assembly of alpha-beta TR heterodimers with CD3 occurs in the endoplasmic reticulum where a single alpha-beta TR heterodimer associates with one CD3D-CD3E heterodimer, one CD3G-CD3E heterodimer and one CD247 homodimer forming a stable octameric structure. CD3D-CD3E and CD3G-CD3E heterodimers preferentially associate with TR alpha and TR beta chains, respectively. The association of the CD247 homodimer is the last step of TcR assembly in the endoplasmic reticulum and is required for transport to the cell surface.

It is found in the cell membrane. V region of the variable domain of T cell receptor (TR) beta chain that participates in the antigen recognition. Alpha-beta T cell receptors are antigen specific receptors which are essential to the immune response and are present on the cell surface of T lymphocytes. Recognize peptide-major histocompatibility (MH) (pMH) complexes that are displayed by antigen presenting cells (APC), a prerequisite for efficient T cell adaptive immunity against pathogens. Binding of alpha-beta TR to pMH complex initiates TR-CD3 clustering on the cell surface and intracellular activation of LCK that phosphorylates the ITAM motifs of CD3G, CD3D, CD3E and CD247 enabling the recruitment of ZAP70. In turn ZAP70 phosphorylates LAT, which recruits numerous signaling molecules to form the LAT signalosome. The LAT signalosome propagates signal branching to three major signaling pathways, the calcium, the mitogen-activated protein kinase (MAPK) kinase and the nuclear factor NF-kappa-B (NF-kB) pathways, leading to the mobilization of transcription factors that are critical for gene expression and essential for T cell growth and differentiation. The T cell repertoire is generated in the thymus, by V-(D)-J rearrangement. This repertoire is then shaped by intrathymic selection events to generate a peripheral T cell pool of self-MH restricted, non-autoaggressive T cells. Post-thymic interaction of alpha-beta TR with the pMH complexes shapes TR structural and functional avidity. The polypeptide is T cell receptor beta variable 5-4 (Homo sapiens (Human)).